A 284-amino-acid polypeptide reads, in one-letter code: Diaminopimelate epimerase (284 aa).

The substrate site is built by Asn13 and Asn66. Cys75 acts as the Proton donor in catalysis. Residues 76 to 77 (GN), Asn166, Asn199, and 217 to 218 (ER) contribute to the substrate site. Cys226 (proton acceptor) is an active-site residue. 227–228 (GT) contributes to the substrate binding site.

This sequence belongs to the diaminopimelate epimerase family. As to quaternary structure, homodimer.

The protein localises to the cytoplasm. It carries out the reaction (2S,6S)-2,6-diaminopimelate = meso-2,6-diaminopimelate. The protein operates within amino-acid biosynthesis; L-lysine biosynthesis via DAP pathway; DL-2,6-diaminopimelate from LL-2,6-diaminopimelate: step 1/1. In terms of biological role, catalyzes the stereoinversion of LL-2,6-diaminopimelate (L,L-DAP) to meso-diaminopimelate (meso-DAP), a precursor of L-lysine and an essential component of the bacterial peptidoglycan. The chain is Diaminopimelate epimerase from Halothermothrix orenii (strain H 168 / OCM 544 / DSM 9562).